Reading from the N-terminus, the 240-residue chain is Lysoplasmalogenase TMEM86A (240 aa).

Topologically, residues 1-21 are cytoplasmic; that stretch reads MVSPVTVVKSEGPKLVPFFKA. The helical transmembrane segment at 22 to 42 threads the bilayer; that stretch reads TCVYFVLWLPSSSPSWVSTLI. Position 43 (lysine 43) is a topological domain, extracellular. The chain crosses the membrane as a helical span at residues 44–64; that stretch reads CLPIFCLWLFLLAHGLGFLLA. The Cytoplasmic segment spans residues 65-70; that stretch reads HPSATR. A helical transmembrane segment spans residues 71–91; that stretch reads IFVGLVFSAVGDAFLIWQDQG. Position 92 (tyrosine 92) is a topological domain, extracellular. A helical membrane pass occupies residues 93–113; sequence FVHGLLMFAVTHMFYASAFGM. At 114–115 the chain is on the cytoplasmic side; it reads QP. Residues 116–136 form a helical membrane-spanning segment; sequence LALRTGLVMAALSGLCYALLY. The Extracellular portion of the chain corresponds to 137–138; that stretch reads PC. Residues 139–159 traverse the membrane as a helical segment; the sequence is LSGAFTYLVGVYVALIGFMGW. Residues 160 to 174 lie on the Cytoplasmic side of the membrane; the sequence is RAMAGLRLAGADWRW. The chain crosses the membrane as a helical span at residues 175 to 195; the sequence is TELAAGSGALFFIISDLTIAL. At 196-206 the chain is on the extracellular side; that stretch reads NKFCFPVPYSR. Residues 207-227 traverse the membrane as a helical segment; it reads ALIMSTYYVAQMLVALSAVES. Residues 228-240 are Cytoplasmic-facing; it reads REPVEHYRLTKAN.

The protein belongs to the TMEM86 family. Expressed in the macrophages.

Its subcellular location is the endoplasmic reticulum membrane. The enzyme catalyses a 1-O-(1Z-alkenyl)-sn-glycero-3-phosphocholine + H2O = a 2,3-saturated aldehyde + sn-glycerol 3-phosphocholine. The catalysed reaction is a 1-O-(1Z-alkenyl)-sn-glycero-3-phosphoethanolamine + H2O = a 2,3-saturated aldehyde + sn-glycero-3-phosphoethanolamine. In terms of biological role, catalyzes the hydrolysis of the vinyl ether bond of choline or ethanolamine lysoplasmalogens, forming fatty aldehyde and glycerophosphocholine or glycerophosphoethanolamine, respectively and is specific for the sn-2-deacylated (lyso) form of plasmalogen. Plays an important role in lysoplasmalogen metabolism in the adipocyte tissue and macrophages. The protein is Lysoplasmalogenase TMEM86A (TMEM86A) of Homo sapiens (Human).